A 296-amino-acid chain; its full sequence is Nucleotide-binding protein RSc0403 (296 aa).

8–15 (GMSGSGKS) is a binding site for ATP. 57 to 60 (DIRS) provides a ligand contact to GTP. Residues 99-124 (TRRRHPLSIRNGRPDAGNPPSAAKGP) are disordered.

The protein belongs to the RapZ-like family.

In terms of biological role, displays ATPase and GTPase activities. The protein is Nucleotide-binding protein RSc0403 of Ralstonia nicotianae (strain ATCC BAA-1114 / GMI1000) (Ralstonia solanacearum).